The following is a 363-amino-acid chain: Outer membrane porin F (363 aa).

The first 22 residues, 1–22 (MMKRKILAAVIPALLAAATANA), serve as a signal peptide directing secretion.

It belongs to the Gram-negative porin family. In terms of assembly, homotrimer. Forms mixed heterotrimers with OmpC and with PhoE; other mixed heterotrimers with other porins are also probable.

The protein resides in the cell outer membrane. Functionally, forms pores that allow passive diffusion of small molecules across the outer membrane. This Salmonella typhimurium (strain SL1344) protein is Outer membrane porin F.